Consider the following 116-residue polypeptide: Flagellar transcriptional regulator FlhD (116 aa).

It belongs to the FlhD family. As to quaternary structure, homodimer; disulfide-linked. Forms a heterohexamer composed of two FlhC and four FlhD subunits. Each FlhC binds a FlhD dimer, forming a heterotrimer, and a hexamer assembles by dimerization of two heterotrimers.

The protein localises to the cytoplasm. Functionally, functions in complex with FlhC as a master transcriptional regulator that regulates transcription of several flagellar and non-flagellar operons by binding to their promoter region. Activates expression of class 2 flagellar genes, including fliA, which is a flagellum-specific sigma factor that turns on the class 3 genes. Also regulates genes whose products function in a variety of physiological pathways. The polypeptide is Flagellar transcriptional regulator FlhD (Escherichia coli O9:H4 (strain HS)).